The primary structure comprises 333 residues: Cell division protein ZipA (333 aa).

At 1 to 5 (MQELR) the chain is on the periplasmic side. A helical membrane pass occupies residues 6-26 (LVLILVGALAIAALLFHGLWT). Over 27 to 333 (SRKETSSKFG…KQRVKVFCRK (307 aa)) the chain is Cytoplasmic. Basic and acidic residues predominate over residues 72 to 81 (KEPAFAREEV). The segment at 72–119 (KEPAFAREEVPTSDDPLFEGTVSSESNKFTQQEKPTVQQAQPQPQPQP) is disordered. Residues 92–107 (TVSSESNKFTQQEKPT) are compositionally biased toward polar residues. Residues 108–119 (VQQAQPQPQPQP) are compositionally biased toward low complexity.

This sequence belongs to the ZipA family. Interacts with FtsZ via their C-terminal domains.

The protein localises to the cell inner membrane. Essential cell division protein that stabilizes the FtsZ protofilaments by cross-linking them and that serves as a cytoplasmic membrane anchor for the Z ring. Also required for the recruitment to the septal ring of downstream cell division proteins. The sequence is that of Cell division protein ZipA from Aliivibrio fischeri (strain ATCC 700601 / ES114) (Vibrio fischeri).